The sequence spans 175 residues: RNA pyrophosphohydrolase (175 aa).

The Nudix hydrolase domain maps to 6 to 150 (GFRPNVGIVI…KREVYRRVMK (145 aa)). The short motif at 38–59 (GGVDDGETPEQAMYRELYEEIG) is the Nudix box element.

It belongs to the Nudix hydrolase family. RppH subfamily. The cofactor is a divalent metal cation.

Accelerates the degradation of transcripts by removing pyrophosphate from the 5'-end of triphosphorylated RNA, leading to a more labile monophosphorylated state that can stimulate subsequent ribonuclease cleavage. The polypeptide is RNA pyrophosphohydrolase (Aeromonas hydrophila subsp. hydrophila (strain ATCC 7966 / DSM 30187 / BCRC 13018 / CCUG 14551 / JCM 1027 / KCTC 2358 / NCIMB 9240 / NCTC 8049)).